Consider the following 691-residue polypeptide: NADH-ubiquinone oxidoreductase 75 kDa subunit (691 aa).

The 78-residue stretch at 1 to 78 (MVNVFVDGLS…NMKIFTNTPL (78 aa)) folds into the 2Fe-2S ferredoxin-type domain. Cys34, Cys45, Cys48, and Cys62 together coordinate [2Fe-2S] cluster. The 4Fe-4S His(Cys)3-ligated-type domain maps to 78-117 (LVKKAREGVLEFLLVNHPLDCPICDQGGECDLQDLTMVYG). His94, Cys98, Cys101, Cys107, Cys146, Cys149, Cys152, and Cys196 together coordinate [4Fe-4S] cluster. The 4Fe-4S Mo/W bis-MGD-type domain occupies 215 to 271 (LQSTESIDVSDAIGSNIRIDVRGSEIMRILPRLNEDVNEEWISDKARFCYDGLKRQR).

This sequence belongs to the complex I 75 kDa subunit family. In terms of assembly, complex I is composed of about 30 different subunits. [2Fe-2S] cluster is required as a cofactor. Requires [4Fe-4S] cluster as cofactor.

The protein localises to the mitochondrion inner membrane. It catalyses the reaction a ubiquinone + NADH + 5 H(+)(in) = a ubiquinol + NAD(+) + 4 H(+)(out). Core subunit of the mitochondrial membrane respiratory chain NADH dehydrogenase (Complex I) that is believed to belong to the minimal assembly required for catalysis. Complex I functions in the transfer of electrons from NADH to the respiratory chain. The immediate electron acceptor for the enzyme is believed to be ubiquinone. This is the largest subunit of complex I and it is a component of the iron-sulfur (IP) fragment of the enzyme. It may form part of the active site crevice where NADH is oxidized. The protein is NADH-ubiquinone oxidoreductase 75 kDa subunit (NAD11) of Reclinomonas americana.